We begin with the raw amino-acid sequence, 237 residues long: MAKDTTGRMRVTVKSGGRMKLSSKLWLERQLNDPYVAQAKRDGYRSRAAYKLTEIDDKFRLLKSGMAVVDLGAAPGGWSQVAAKKVGAADGRGKVVAIDLLEMGEVPGVTFAQLDFLDPSAPERLREMLGGGADIVMSDMAANTTGHRKTDQLRIVGLVETAAMFASEVLKPGGTFLAKVFQSGADASLMTELKRDYASVKHVKPAASRKDSSERYLLATGFRGGAARDAEAAAETE.

5 residues coordinate S-adenosyl-L-methionine: Gly76, Trp78, Asp99, Asp115, and Asp139. Catalysis depends on Lys179, which acts as the Proton acceptor.

This sequence belongs to the class I-like SAM-binding methyltransferase superfamily. RNA methyltransferase RlmE family.

Its subcellular location is the cytoplasm. The catalysed reaction is uridine(2552) in 23S rRNA + S-adenosyl-L-methionine = 2'-O-methyluridine(2552) in 23S rRNA + S-adenosyl-L-homocysteine + H(+). Specifically methylates the uridine in position 2552 of 23S rRNA at the 2'-O position of the ribose in the fully assembled 50S ribosomal subunit. This chain is Ribosomal RNA large subunit methyltransferase E, found in Rhodopseudomonas palustris (strain ATCC BAA-98 / CGA009).